A 373-amino-acid chain; its full sequence is Probable tRNA sulfurtransferase (373 aa).

The THUMP domain maps to 54–158 (NKNIEELSKV…NDVAYFYYKI (105 aa)). ATP contacts are provided by residues 176–177 (LF), 201–202 (NF), Lys256, Gly278, and Gln287.

It belongs to the ThiI family.

The protein localises to the cytoplasm. It catalyses the reaction [ThiI sulfur-carrier protein]-S-sulfanyl-L-cysteine + a uridine in tRNA + 2 reduced [2Fe-2S]-[ferredoxin] + ATP + H(+) = [ThiI sulfur-carrier protein]-L-cysteine + a 4-thiouridine in tRNA + 2 oxidized [2Fe-2S]-[ferredoxin] + AMP + diphosphate. The enzyme catalyses [ThiS sulfur-carrier protein]-C-terminal Gly-Gly-AMP + S-sulfanyl-L-cysteinyl-[cysteine desulfurase] + AH2 = [ThiS sulfur-carrier protein]-C-terminal-Gly-aminoethanethioate + L-cysteinyl-[cysteine desulfurase] + A + AMP + 2 H(+). It participates in cofactor biosynthesis; thiamine diphosphate biosynthesis. Its function is as follows. Catalyzes the ATP-dependent transfer of a sulfur to tRNA to produce 4-thiouridine in position 8 of tRNAs, which functions as a near-UV photosensor. Also catalyzes the transfer of sulfur to the sulfur carrier protein ThiS, forming ThiS-thiocarboxylate. This is a step in the synthesis of thiazole, in the thiamine biosynthesis pathway. The sulfur is donated as persulfide by IscS. The protein is Probable tRNA sulfurtransferase of Saccharolobus islandicus (strain Y.N.15.51 / Yellowstone #2) (Sulfolobus islandicus).